A 504-amino-acid polypeptide reads, in one-letter code: Histidine ammonia-lyase (504 aa).

Positions 142-144 form a cross-link, 5-imidazolinone (Ala-Gly); the sequence is ASG. A 2,3-didehydroalanine (Ser) modification is found at serine 143.

It belongs to the PAL/histidase family. Contains an active site 4-methylidene-imidazol-5-one (MIO), which is formed autocatalytically by cyclization and dehydration of residues Ala-Ser-Gly.

It is found in the cytoplasm. It catalyses the reaction L-histidine = trans-urocanate + NH4(+). It participates in amino-acid degradation; L-histidine degradation into L-glutamate; N-formimidoyl-L-glutamate from L-histidine: step 1/3. In Staphylococcus aureus (strain MRSA252), this protein is Histidine ammonia-lyase.